Here is a 261-residue protein sequence, read N- to C-terminus: MEHEQKSGAVLLRLLRLLWLLPHSWAVLEASTPVLWDDPQNHTFRHTLFCQDGIPNIGLSETYDEDELFSFDFSQNTRVPRLPDFAEWAQGQGDASAIAFGKSFCEMLMREVSPKLEGQIPVSRGLSVAEVFTLKPLEFGKPNTLVCFISNLFPPTLTVNWQLHSAPVEGASPTSISAVDGLTFQAFSYLNFTPEPFDLYSCTVTHEIDRYTAIAYWVPQNALPSDLLENALCGVAFALGVLGTIIGIVFFLCSQRPCSGD.

A signal peptide spans 1-26 (MEHEQKSGAVLLRLLRLLWLLPHSWA). Residues 27–124 (VLEASTPVLW…KLEGQIPVSR (98 aa)) form an alpha-1 region. The Lumenal segment spans residues 27-231 (VLEASTPVLW…ALPSDLLENA (205 aa)). Residue Asn-41 is glycosylated (N-linked (GlcNAc...) asparagine). Disulfide bonds link Cys-50–Cys-105 and Cys-147–Cys-202. The Ig-like C1-type domain maps to 114 to 215 (PKLEGQIPVS…HEIDRYTAIA (102 aa)). Positions 125–217 (GLSVAEVFTL…IDRYTAIAYW (93 aa)) are alpha-2. Positions 218-231 (VPQNALPSDLLENA) are connecting peptide. A helical membrane pass occupies residues 232-252 (LCGVAFALGVLGTIIGIVFFL). At 253–261 (CSQRPCSGD) the chain is on the cytoplasmic side.

The protein belongs to the MHC class II family. Heterodimer of an alpha chain (DMA) and a beta chain (DMB). Interacts with MHCII; this interaction mediates rapid selection of high-affinity peptides.

The protein localises to the late endosome membrane. Its subcellular location is the lysosome membrane. In terms of biological role, plays a critical role in catalyzing the release of class II-associated invariant chain peptide (CLIP) from newly synthesized MHC class II molecules and freeing the peptide binding site for acquisition of antigenic peptides. This chain is Class II histocompatibility antigen, M alpha chain (H2-DMa), found in Mus musculus (Mouse).